We begin with the raw amino-acid sequence, 239 residues long: 2,3,4,5-tetrahydropyridine-2,6-dicarboxylate N-acetyltransferase (239 aa).

It belongs to the transferase hexapeptide repeat family. DapH subfamily.

The enzyme catalyses (S)-2,3,4,5-tetrahydrodipicolinate + acetyl-CoA + H2O = L-2-acetamido-6-oxoheptanedioate + CoA. It functions in the pathway amino-acid biosynthesis; L-lysine biosynthesis via DAP pathway; LL-2,6-diaminopimelate from (S)-tetrahydrodipicolinate (acetylase route): step 1/3. Its function is as follows. Catalyzes the transfer of an acetyl group from acetyl-CoA to tetrahydrodipicolinate. The polypeptide is 2,3,4,5-tetrahydropyridine-2,6-dicarboxylate N-acetyltransferase (Staphylococcus carnosus (strain TM300)).